Consider the following 244-residue polypeptide: Type III pantothenate kinase (244 aa).

Position 12 to 19 (12 to 19 (VVGNTHVR)) interacts with ATP. Substrate-binding positions include Y79 and 83 to 86 (GLDR). D85 acts as the Proton acceptor in catalysis. D105 serves as a coordination point for K(+). Residue T108 participates in ATP binding. T163 contacts substrate.

Belongs to the type III pantothenate kinase family. Homodimer. Requires NH4(+) as cofactor. K(+) is required as a cofactor.

It is found in the cytoplasm. The catalysed reaction is (R)-pantothenate + ATP = (R)-4'-phosphopantothenate + ADP + H(+). The protein operates within cofactor biosynthesis; coenzyme A biosynthesis; CoA from (R)-pantothenate: step 1/5. Catalyzes the phosphorylation of pantothenate (Pan), the first step in CoA biosynthesis. The chain is Type III pantothenate kinase from Synechococcus sp. (strain JA-3-3Ab) (Cyanobacteria bacterium Yellowstone A-Prime).